We begin with the raw amino-acid sequence, 522 residues long: 3'3'-cGAMP-specific phosphodiesterase 2 (522 aa).

One can recognise a Response regulatory domain in the interval 36 to 160; that stretch reads CVLLVDDDEQ…QKLRTLLYSM (125 aa). Aspartate 91 bears the 4-aspartylphosphate mark. The HD-GYP domain maps to 325–522; that stretch reads LRETSKELVY…FIAIRASLPD (198 aa). A divalent metal cation is bound by residues histidine 382 and aspartate 383. Catalysis depends on lysine 386, which acts as the Proton donor. A divalent metal cation-binding residues include histidine 411, histidine 437, histidine 438, and aspartate 466.

In terms of assembly, homodimer. The cofactor is Mn(2+).

The catalysed reaction is 3',3'-cGAMP + H2O = 5'-pApG-3' + H(+). In terms of biological role, phosphodiesterase (PDE) that catalyzes the hydrolysis of 3'3'-cyclic GMP-AMP (3'3'-cGAMP), leading to linear 5'-pApG. Counteracts the function of the 3'3'-cGAMP synthase DncV, and is involved in the modulation of intracellular 3'3'-cGAMP levels. Enhances bacterial chemotaxis and inhibits intestinal colonization in vivo. Thus exerts a crucial role in regulating bacterial infectivity through catalyzing 3'3'-cGAMP degradation. Is specific for 3'3'-cGAMP since it cannot degrade other cGAMP linkage isomers (3'2'-, 2'3'-, and 2'2'-cGAMPs). Is also able to hydrolyze c-di-GMP but not c-di-AMP. The sequence is that of 3'3'-cGAMP-specific phosphodiesterase 2 from Vibrio cholerae serotype O1 (strain ATCC 39315 / El Tor Inaba N16961).